Here is a 442-residue protein sequence, read N- to C-terminus: ATP-dependent protease ATPase subunit HslU (442 aa).

ATP is bound by residues isoleucine 18 and 60-65; that span reads GVGKTE. The disordered stretch occupies residues 136 to 157; sequence LPKPKNDWESTETDSSSNTRQV. Residues aspartate 255, glutamate 320, and arginine 392 each coordinate ATP.

The protein belongs to the ClpX chaperone family. HslU subfamily. As to quaternary structure, a double ring-shaped homohexamer of HslV is capped on each side by a ring-shaped HslU homohexamer. The assembly of the HslU/HslV complex is dependent on binding of ATP.

Its subcellular location is the cytoplasm. Functionally, ATPase subunit of a proteasome-like degradation complex; this subunit has chaperone activity. The binding of ATP and its subsequent hydrolysis by HslU are essential for unfolding of protein substrates subsequently hydrolyzed by HslV. HslU recognizes the N-terminal part of its protein substrates and unfolds these before they are guided to HslV for hydrolysis. This Shewanella baltica (strain OS185) protein is ATP-dependent protease ATPase subunit HslU.